The following is a 418-amino-acid chain: Gamma-glutamyl phosphate reductase (418 aa).

Belongs to the gamma-glutamyl phosphate reductase family.

The protein resides in the cytoplasm. The catalysed reaction is L-glutamate 5-semialdehyde + phosphate + NADP(+) = L-glutamyl 5-phosphate + NADPH + H(+). It participates in amino-acid biosynthesis; L-proline biosynthesis; L-glutamate 5-semialdehyde from L-glutamate: step 2/2. In terms of biological role, catalyzes the NADPH-dependent reduction of L-glutamate 5-phosphate into L-glutamate 5-semialdehyde and phosphate. The product spontaneously undergoes cyclization to form 1-pyrroline-5-carboxylate. This Citrifermentans bemidjiense (strain ATCC BAA-1014 / DSM 16622 / JCM 12645 / Bem) (Geobacter bemidjiensis) protein is Gamma-glutamyl phosphate reductase.